The sequence spans 54 residues: uncharacterized protein (54 aa).

The protein belongs to the ycf18/nblA family.

It is found in the plastid. The protein localises to the chloroplast. This is an uncharacterized protein from Cyanidium caldarium (Red alga).